We begin with the raw amino-acid sequence, 497 residues long: Cytochrome P450 71A20 (497 aa).

Residues 3-23 form a helical membrane-spanning segment; it reads MILITLCLTTLLALLLKSILK. Heme is bound at residue Cys440.

It belongs to the cytochrome P450 family. Heme is required as a cofactor.

The protein resides in the membrane. In Arabidopsis thaliana (Mouse-ear cress), this protein is Cytochrome P450 71A20 (CYP71A20).